The chain runs to 151 residues: Cytochrome c-type biogenesis protein CcmE (151 aa).

Residues 1 to 8 (MNPLRRKR) lie on the Cytoplasmic side of the membrane. A helical; Signal-anchor for type II membrane protein membrane pass occupies residues 9–29 (LLIILAILVGVGIAVGLALSA). Topologically, residues 30 to 151 (LQQNINLFYT…QSAPTPAKEG (122 aa)) are periplasmic. Residues H124 and Y128 each coordinate heme.

The protein belongs to the CcmE/CycJ family.

Its subcellular location is the cell inner membrane. Functionally, heme chaperone required for the biogenesis of c-type cytochromes. Transiently binds heme delivered by CcmC and transfers the heme to apo-cytochromes in a process facilitated by CcmF and CcmH. In Pseudomonas fluorescens (strain SBW25), this protein is Cytochrome c-type biogenesis protein CcmE.